Here is a 126-residue protein sequence, read N- to C-terminus: Spermidine export protein MdtJ (126 aa).

Transmembrane regions (helical) follow at residues 1 to 21 (MMIY…GTLS), 32 to 52 (TGHI…ALAV), 55 to 75 (VALG…ITVF), and 82 to 102 (ESLS…IMLV). The interval 104 to 126 (SGTRKPKKPNSPNRNSGEHHATA) is disordered.

This sequence belongs to the drug/metabolite transporter (DMT) superfamily. Small multidrug resistance (SMR) (TC 2.A.7.1) family. MdtJ subfamily. In terms of assembly, forms a complex with MdtI.

Its subcellular location is the cell inner membrane. In terms of biological role, catalyzes the excretion of spermidine. This Yersinia enterocolitica serotype O:8 / biotype 1B (strain NCTC 13174 / 8081) protein is Spermidine export protein MdtJ.